Here is a 103-residue protein sequence, read N- to C-terminus: Large ribosomal subunit protein bL21 (103 aa).

This sequence belongs to the bacterial ribosomal protein bL21 family. Part of the 50S ribosomal subunit. Contacts protein L20.

This protein binds to 23S rRNA in the presence of protein L20. The chain is Large ribosomal subunit protein bL21 from Mannheimia succiniciproducens (strain KCTC 0769BP / MBEL55E).